Reading from the N-terminus, the 384-residue chain is Spermidine/putrescine import ATP-binding protein PotA (384 aa).

One can recognise an ABC transporter domain in the interval 6–238 (ITFNNVSKTF…PINHFVANFI (233 aa)). 40-47 (GASGSGKS) contacts ATP.

This sequence belongs to the ABC transporter superfamily. Spermidine/putrescine importer (TC 3.A.1.11.1) family. The complex is composed of two ATP-binding proteins (PotA), two transmembrane proteins (PotB and PotC) and a solute-binding protein (PotD).

It localises to the cell membrane. The enzyme catalyses ATP + H2O + polyamine-[polyamine-binding protein]Side 1 = ADP + phosphate + polyamineSide 2 + [polyamine-binding protein]Side 1.. Part of the ABC transporter complex PotABCD involved in spermidine/putrescine import. Responsible for energy coupling to the transport system. This chain is Spermidine/putrescine import ATP-binding protein PotA, found in Streptococcus pyogenes serotype M6 (strain ATCC BAA-946 / MGAS10394).